A 362-amino-acid chain; its full sequence is Histidinol-phosphate aminotransferase (362 aa).

Lys-219 is subject to N6-(pyridoxal phosphate)lysine.

The protein belongs to the class-II pyridoxal-phosphate-dependent aminotransferase family. Histidinol-phosphate aminotransferase subfamily. In terms of assembly, homodimer. Requires pyridoxal 5'-phosphate as cofactor.

The enzyme catalyses L-histidinol phosphate + 2-oxoglutarate = 3-(imidazol-4-yl)-2-oxopropyl phosphate + L-glutamate. It participates in amino-acid biosynthesis; L-histidine biosynthesis; L-histidine from 5-phospho-alpha-D-ribose 1-diphosphate: step 7/9. The chain is Histidinol-phosphate aminotransferase from Maricaulis maris (strain MCS10) (Caulobacter maris).